The following is a 298-amino-acid chain: Ethanolamine ammonia-lyase small subunit (298 aa).

Val-210, Glu-231, and Cys-261 together coordinate adenosylcob(III)alamin.

It belongs to the EutC family. In terms of assembly, the basic unit is a heterodimer which dimerizes to form tetramers. The heterotetramers trimerize; 6 large subunits form a core ring with 6 small subunits projecting outwards. The cofactor is adenosylcob(III)alamin.

It localises to the bacterial microcompartment. It catalyses the reaction ethanolamine = acetaldehyde + NH4(+). It participates in amine and polyamine degradation; ethanolamine degradation. Its function is as follows. Catalyzes the deamination of various vicinal amino-alcohols to oxo compounds. Allows this organism to utilize ethanolamine as the sole source of nitrogen and carbon in the presence of external vitamin B12. The polypeptide is Ethanolamine ammonia-lyase small subunit (Salmonella dublin (strain CT_02021853)).